Here is an 84-residue protein sequence, read N- to C-terminus: Toxin BmKaTx13 (84 aa).

The signal sequence occupies residues 1-19 (MNYLVMISFALLLMKGVES). In terms of domain architecture, LCN-type CS-alpha/beta spans 21 to 83 (RDAYIAKPEN…VPIRVPGKCH (63 aa)). 4 disulfide bridges follow: Cys-31–Cys-82, Cys-35–Cys-55, Cys-41–Cys-65, and Cys-45–Cys-67. Residue Arg-84 is a propeptide, removed by a carboxypeptidase.

It belongs to the long (4 C-C) scorpion toxin superfamily. Sodium channel inhibitor family. Alpha subfamily. In terms of tissue distribution, expressed by the venom gland.

It localises to the secreted. Alpha toxins bind voltage-independently at site-3 of sodium channels (Nav) and inhibit the inactivation of the activated channels, thereby blocking neuronal transmission. This toxin is active against mammals. The chain is Toxin BmKaTx13 from Olivierus martensii (Manchurian scorpion).